A 307-amino-acid chain; its full sequence is Mitochondrial brown fat uncoupling protein 1 (307 aa).

The Mitochondrial intermembrane segment spans residues Met1–Gln10. The chain crosses the membrane as a helical span at residues Pro11–Phe32. Solcar repeat units follow at residues Pro11–Tyr102, Ala111–Ala201, and Asp210–Glu295. The Mitochondrial matrix segment spans residues Pro33–Lys73. Lys56 serves as a coordination point for fatty acid 16:0. The chain crosses the membrane as a helical span at residues Leu74–Tyr96. Over Asp97–Lys116 the chain is Mitochondrial intermembrane. Residues Ile117–Pro133 traverse the membrane as a helical segment. Over Thr134–Thr178 the chain is Mitochondrial matrix. A helical membrane pass occupies residues Pro179–Tyr195. At Asp196–Val212 the chain is on the mitochondrial intermembrane side. Residues Pro213–Pro232 form a helical membrane-spanning segment. The Mitochondrial matrix portion of the chain corresponds to Val233–Ala266. The residue at position 254 (Cys254) is a Cysteine sulfenic acid (-SOH). A helical transmembrane segment spans residues Phe267–Phe289. Residue Lys269 coordinates fatty acid 16:0. The Mitochondrial intermembrane portion of the chain corresponds to Glu290–Thr307.

This sequence belongs to the mitochondrial carrier (TC 2.A.29) family. In terms of assembly, most probably functions as a monomer. Binds one purine nucleotide per monomer. However, has also been suggested to function as a homodimer or a homotetramer. Tightly associates with cardiolipin in the mitochondrion inner membrane; may stabilize and regulate its activity. In terms of processing, may undergo ubiquitin-mediated proteasomal degradation. May undergo sulfenylation upon cold exposure. May increase the sensitivity of UCP1 thermogenic function to the activation by noradrenaline probably through structural effects. In terms of tissue distribution, brown adipose tissue.

The protein localises to the mitochondrion inner membrane. It catalyses the reaction H(+)(in) = H(+)(out). Its activity is regulated as follows. Has no constitutive proton transporter activity and has to be activated by long-chain fatty acids/LCFAs. Inhibited by purine nucleotides. Both purine nucleotides and LCFAs bind the cytosolic side of the transporter and directly compete to activate or inhibit it. Activated by noradrenaline and reactive oxygen species. Despite lacking canonical translational encoding for selenocysteine, a small pool of the protein has been observed to selectively incorporate selenocysteine at 'Cys-254'. Selenocysteine-modified protein is highly sensitive to redox modification and may constitute a pool of protein highly sensitive to activation by elevated levels of reactive oxygen species (ROS). Its function is as follows. Mitochondrial protein responsible for thermogenic respiration, a specialized capacity of brown adipose tissue and beige fat that participates in non-shivering adaptive thermogenesis to temperature and diet variations and more generally to the regulation of energy balance. Functions as a long-chain fatty acid/LCFA and proton symporter, simultaneously transporting one LCFA and one proton through the inner mitochondrial membrane. However, LCFAs remaining associated with the transporter via their hydrophobic tails, it results in an apparent transport of protons activated by LCFAs. Thereby, dissipates the mitochondrial proton gradient and converts the energy of substrate oxydation into heat instead of ATP. Regulates the production of reactive oxygen species/ROS by mitochondria. The chain is Mitochondrial brown fat uncoupling protein 1 from Rattus norvegicus (Rat).